The sequence spans 224 residues: UPF0758 protein Mmwyl1_0624 (224 aa).

The region spanning 102-224 (VFASAEHVRT…PVSLAERGLV (123 aa)) is the MPN domain. The Zn(2+) site is built by histidine 173, histidine 175, and aspartate 186. A JAMM motif motif is present at residues 173 to 186 (HNHPSGIAEPSQAD).

It belongs to the UPF0758 family.

This chain is UPF0758 protein Mmwyl1_0624, found in Marinomonas sp. (strain MWYL1).